A 683-amino-acid polypeptide reads, in one-letter code: DNA ligase (683 aa).

NAD(+) contacts are provided by residues 29–33, 79–80, and glutamate 109; these read DAEFD and SL. Lysine 111 acts as the N6-AMP-lysine intermediate in catalysis. The NAD(+) site is built by arginine 132, glutamate 172, lysine 288, and lysine 312. Zn(2+) is bound by residues cysteine 406, cysteine 409, cysteine 425, and cysteine 431. A BRCT domain is found at 595 to 683; it reads SVPRTLAGVT…GPPAEAGEPT (89 aa).

It belongs to the NAD-dependent DNA ligase family. LigA subfamily. The cofactor is Mg(2+). It depends on Mn(2+) as a cofactor.

It catalyses the reaction NAD(+) + (deoxyribonucleotide)n-3'-hydroxyl + 5'-phospho-(deoxyribonucleotide)m = (deoxyribonucleotide)n+m + AMP + beta-nicotinamide D-nucleotide.. Its function is as follows. DNA ligase that catalyzes the formation of phosphodiester linkages between 5'-phosphoryl and 3'-hydroxyl groups in double-stranded DNA using NAD as a coenzyme and as the energy source for the reaction. It is essential for DNA replication and repair of damaged DNA. The sequence is that of DNA ligase from Mycobacterium ulcerans (strain Agy99).